We begin with the raw amino-acid sequence, 274 residues long: Nitrogenase iron protein (274 aa).

8 to 15 (GKGGIGKS) contacts ATP. Residue C94 participates in [4Fe-4S] cluster binding. Residue R97 is modified to ADP-ribosylarginine; by dinitrogenase reductase ADP-ribosyltransferase. C131 provides a ligand contact to [4Fe-4S] cluster.

It belongs to the NifH/BchL/ChlL family. In terms of assembly, homodimer. Requires [4Fe-4S] cluster as cofactor. The reversible ADP-ribosylation of Arg-97 inactivates the nitrogenase reductase and regulates nitrogenase activity.

It carries out the reaction N2 + 8 reduced [2Fe-2S]-[ferredoxin] + 16 ATP + 16 H2O = H2 + 8 oxidized [2Fe-2S]-[ferredoxin] + 2 NH4(+) + 16 ADP + 16 phosphate + 6 H(+). Its function is as follows. The key enzymatic reactions in nitrogen fixation are catalyzed by the nitrogenase complex, which has 2 components: the iron protein and the molybdenum-iron protein. This is Nitrogenase iron protein from Desulfatibacillum aliphaticivorans.